Consider the following 1482-residue polypeptide: Cystic fibrosis transmembrane conductance regulator (1482 aa).

Residues 1–77 (MQRSPLEKAS…KLINALRRCF (77 aa)) are Cytoplasmic-facing. The chain crosses the membrane as a helical span at residues 78–98 (FWRFMFYGILLYLGEVTKAVQ). Positions 81 to 365 (FMFYGILLYL…WAVQTWYDSL (285 aa)) constitute an ABC transmembrane type-1 1 domain. At 99–122 (PLLLGRIIASYDPDNKVERSIAIY) the chain is on the extracellular side. Residues 123-146 (LGIGLCLLFIVRTLLLHPAIFGLH) traverse the membrane as a helical segment. Topologically, residues 147–195 (HIGMQMRIAMFSLIYKKILKLSSRVLDKISIGQLVSLLSNNLNKFDEGL) are cytoplasmic. Residues 196 to 216 (ALAHFVWIAPLQVTLLMGLLW) form a helical membrane-spanning segment. The Extracellular portion of the chain corresponds to 217–222 (ELLQAS). Residues 223–243 (AFCGLGFLIVLALVQAGLGRM) traverse the membrane as a helical segment. Residues 244–298 (MMKYRDQRAGKINERLVITSEMIENIQSVKAYCWEEAMEKMIENLRQTELKLTRK) are Cytoplasmic-facing. A helical transmembrane segment spans residues 299-319 (AAYVRYFNSSAFFFSGFFVVF). Topologically, residues 320–339 (LSVLPYALIKGIILRKIFTT) are extracellular. A helical membrane pass occupies residues 340–358 (ISFCIVLRMAVTRQFPWAV). Topologically, residues 359–859 (QTWYDSLGAI…YLRYLAVNKS (501 aa)) are cytoplasmic. Residues tryptophan 401, 458–465 (GSTGAGKT), and glutamine 493 contribute to the ATP site. The 224-residue stretch at 423–646 (NGDNSLFFSN…RPDFSSKLMG (224 aa)) folds into the ABC transporter 1 domain. Cysteine 524 is lipidated: S-palmitoyl cysteine. A phosphoserine mark is found at serine 549 and serine 660. The tract at residues 654–832 (SAERRNSILT…EEINEEYLKE (179 aa)) is disordered R region. Serine 670 carries the phosphoserine; by PKA modification. A Phosphoserine modification is found at serine 686. Lysine 688 is covalently cross-linked (Glycyl lysine isopeptide (Lys-Gly) (interchain with G-Cter in ubiquitin)). Phosphoserine occurs at positions 700 and 712. Residue threonine 717 is modified to Phosphothreonine. Phosphoserine is present on residues serine 738, serine 769, serine 791, serine 796, and serine 814. Residues 860 to 880 (LSLVLIWCLVIFLAEVAISLA) traverse the membrane as a helical segment. The 297-residue stretch at 860-1156 (LSLVLIWCLV…AVNSSIDVDS (297 aa)) folds into the ABC transmembrane type-1 2 domain. Residues 881-919 (VLLLLDKSPRYSKGNGTASGNGSSAVIITSTSSYYLFYI) lie on the Extracellular side of the membrane. Asparagine 895 and asparagine 901 each carry an N-linked (GlcNAc...) asparagine glycan. The discontinuously helical transmembrane segment at 920 to 940 (YVGVADTLLALGFFRGLPLVH) threads the bilayer. The Cytoplasmic segment spans residues 941-991 (TLITVSKILHHRMLHSVLRAPMSTLNMLKAGGILNRFSKDIAILDDLLPLT). Residues 992–1012 (IFDFVQLLLIVIGAVAVVSVL) form a helical membrane-spanning segment. Topologically, residues 1013–1014 (QP) are extracellular. The chain crosses the membrane as a helical span at residues 1015–1035 (YIFLATVPVIAAFVILRGYFL). The Cytoplasmic portion of the chain corresponds to 1036-1096 (HTSQQLKQLE…TANWFLYLST (61 aa)). A helical membrane pass occupies residues 1097-1117 (LRWFQMRIEMIFVVFFIAVTF). The Extracellular portion of the chain corresponds to 1118–1131 (ISILTTGEGEGTVG). Residues 1132–1152 (IILTLAMNIMGTLQWAVNSSI) form a helical membrane-spanning segment. Topologically, residues 1153–1482 (DVDSLMRSVS…TEEEVQETRL (330 aa)) are cytoplasmic. Residues 1212-1445 (MTVKDLTARY…KSLFRQAISP (234 aa)) form the ABC transporter 2 domain. ATP contacts are provided by residues tyrosine 1221 and 1246–1253 (GRTGAGKS). Positions 1388–1482 (RTLKQAFADC…TEEEVQETRL (95 aa)) are interaction with GORASP2. Cysteine 1397 is lipidated: S-palmitoyl cysteine. Phosphoserine is present on residues serine 1446 and serine 1458. A disordered region spans residues 1450–1482 (KLFPRRNSSKHKSRSPITALKEETEEEVQETRL). Residues 1451–1463 (LFPRRNSSKHKSR) are compositionally biased toward basic residues. Residues 1472–1482 (ETEEEVQETRL) are compositionally biased toward acidic residues. The short motif at 1480–1482 (TRL) is the PDZ-binding element.

This sequence belongs to the ABC transporter superfamily. ABCC family. CFTR transporter (TC 3.A.1.202) subfamily. In terms of assembly, monomer; does not require oligomerization for channel activity. May form oligomers in the membrane. Interacts with SLC26A3, SLC26A6 and NHERF1. Interacts with SHANK2. Interacts with MYO6. Interacts (via C-terminus) with GOPC (via PDZ domain); this promotes CFTR internalization and thereby decreases channel activity. Interacts with SLC4A7 through NHERF1. Found in a complex with MYO5B and RAB11A. Interacts with ANO1. Interacts with SLC26A8. Interacts with AHCYL1; the interaction increases CFTR activity. Interacts with CSE1L. The core-glycosylated form interacts with GORASP2 (via PDZ GRASP-type 1 domain) in respone to ER stress. Interacts with MARCHF2; the interaction leads to CFTR ubiqtuitination and degradation. Interacts with ADGRG2. In terms of processing, N-glycosylated. Phosphorylated; cAMP treatment promotes phosphorylation and activates the channel. Dephosphorylation decreases the ATPase activity (in vitro). Phosphorylation at PKA sites activates the channel. Phosphorylation at PKC sites enhances the response to phosphorylation by PKA. Phosphorylated by AMPK; this inhibits channel activity. Post-translationally, ubiquitinated, leading to its degradation in the lysosome. Deubiquitination by USP10 in early endosomes enhances its endocytic recycling to the cell membrane. Ubiquitinated by RNF185 during ER stress. Ubiquitinated by MARCHF2.

It is found in the apical cell membrane. The protein localises to the early endosome membrane. Its subcellular location is the cell membrane. It localises to the recycling endosome membrane. The protein resides in the endoplasmic reticulum membrane. It is found in the nucleus. It catalyses the reaction ATP + H2O + closed Cl(-) channel = ADP + phosphate + open Cl(-) channel.. The enzyme catalyses chloride(in) = chloride(out). The catalysed reaction is hydrogencarbonate(in) = hydrogencarbonate(out). It carries out the reaction ATP + H2O = ADP + phosphate + H(+). Epithelial ion channel that plays an important role in the regulation of epithelial ion and water transport and fluid homeostasis. Mediates the transport of chloride ions across the cell membrane. Possesses an intrinsic ATPase activity and utilizes ATP to gate its channel; the passive flow of anions through the channel is gated by cycles of ATP binding and hydrolysis by the ATP-binding domains. The ion channel is also permeable to HCO(3)(-); selectivity depends on the extracellular chloride concentration. Exerts its function also by modulating the activity of other ion channels and transporters. Contributes to the regulation of the pH and the ion content of the epithelial fluid layer. Modulates the activity of the epithelial sodium channel (ENaC) complex, in part by regulating the cell surface expression of the ENaC complex. May regulate bicarbonate secretion and salvage in epithelial cells by regulating the transporter SLC4A7. Can inhibit the chloride channel activity of ANO1. Plays a role in the chloride and bicarbonate homeostasis during sperm epididymal maturation and capacitation. In Otolemur garnettii (Small-eared galago), this protein is Cystic fibrosis transmembrane conductance regulator.